The sequence spans 159 residues: MSNPGDVRPVPHRSKVCRCLFGPVDSEQLRRDCDALMAGCLQEARERWNFDFVTETPLEGNFVWERVRSLGLPKVYLSPGSRSRDDLGGDKRPSTSSALLQGPAPEDHVALSLSCTLVSERPEDSPGGPGTSQGRKRRQTSLTDFYHSKRRLVFCKRKP.

At S2 the chain carries N-acetylserine. S2 is covalently cross-linked (Glycyl serine ester (Ser-Gly) (interchain with G-Cter in ubiquitin)). Residues 12–40 (HRSKVCRCLFGPVDSEQLRRDCDALMAGC) form a C4-type zinc finger. Positions 17-24 (CRCLFGPV) are required for binding cyclins. Positions 53-58 (VTETPL) are required for binding CDKs. Position 78 is a phosphoserine; by NUAK1 (S78). Residues 78-106 (SPGSRSRDDLGGDKRPSTSSALLQGPAPE) are disordered. The segment covering 82–93 (RSRDDLGGDKRP) has biased composition (basic and acidic residues). S112 bears the Phosphoserine; by GSK3-beta mark. Residues 118–142 (VSERPEDSPGGPGTSQGRKRRQTSL) form a disordered region. Phosphoserine is present on S125. The PIP-box K+4 motif motif lies at 135–159 (RKRRQTSLTDFYHSKRRLVFCKRKP). A Phosphothreonine; by PKA, PKB/AKT1, PIM1 and PIM2 modification is found at T140. S141 bears the Phosphoserine; by NUAK1 mark. The interval 147 to 159 (HSKRRLVFCKRKP) is interaction with TRIM39.

It belongs to the CDI family. As to quaternary structure, interacts with HDAC1; the interaction is prevented by competitive binding of C10orf90/FATS to HDAC1 facilitating acetylation and protein stabilization of CDKN1A/p21. Interacts with MKRN1. Interacts with PSMA3. Interacts with PCNA. Component of the ternary complex, cyclin D-CDK4-CDKN1A. Interacts (via its N-terminal domain) with CDK4; the interaction promotes the assembly of the cyclin D-CDK4 complex, its nuclear translocation and promotes the cyclin D-dependent enzyme activity of CDK4. Binding to CDK2 leads to CDK2/cyclin E inactivation at the G1-S phase DNA damage checkpoint, thereby arresting cells at the G1-S transition during DNA repair. Interacts with PIM1. Interacts with STK11. Interacts with NUAK1. Interacts with DTL and TRIM39. Interacts with PKP3; the interaction sequesters CDKN1A to the cytoplasm thereby repressing its role as an inhibitor of CDK4- and CDK6-driven RB1 phosphorylation. Post-translationally, phosphorylation of Thr-140 or Ser-141 impairs binding to PCNA. Phosphorylation at Ser-112 by GSK3-beta enhances ubiquitination by the DCX(DTL) complex. Phosphorylation of Thr-140 by PIM2 enhances its stability and inhibits cell proliferation. Phosphorylation of Thr-140 by PIM1 results in the relocation of CDKN1A to the cytoplasm and enhanced CDKN1A protein stability. UV radiation-induced phosphorylation at Ser-78 and Ser-141 by NUAK1 leads to its degradation. In terms of processing, ubiquitinated by MKRN1; leading to polyubiquitination and 26S proteasome-dependent degradation. Ubiquitinated by the DCX(DTL) complex, also named CRL4(CDT2) complex, leading to its degradation during S phase or following UV irradiation. Ubiquitination by the DCX(DTL) complex is essential to control replication licensing and is PCNA-dependent: interacts with PCNA via its PIP-box, while the presence of the containing the 'K+4' motif in the PIP box, recruit the DCX(DTL) complex, leading to its degradation. Ubiquitination at Ser-2 leads to degradation by the proteasome pathway. Ubiquitinated by RNF114; leading to proteasomal degradation. Acetylation leads to protein stability. Acetylated in vitro on Lys-136, Lys-149, Lys-156 and Lys-158. Deacetylation by HDAC1 is prevented by competitive binding of C10orf90/FATS to HDAC1. Expressed in keratinocytes (at protein level).

It localises to the cytoplasm. It is found in the nucleus. In terms of biological role, may be involved in p53/TP53 mediated inhibition of cellular proliferation in response to DNA damage. Binds to and inhibits cyclin-dependent kinase activity, preventing phosphorylation of critical cyclin-dependent kinase substrates and blocking cell cycle progression. Functions in the nuclear localization and assembly of cyclin D-CDK4 complex and promotes its kinase activity towards RB1. At higher stoichiometric ratios, inhibits the kinase activity of the cyclin D-CDK4 complex. Inhibits DNA synthesis by DNA polymerase delta by competing with POLD3 for PCNA binding. Plays an important role in controlling cell cycle progression and DNA damage-induced G2 arrest. Functionally, plays an important role in controlling cell cycle progression and DNA damage-induced G2 arrest. Involved in p53/TP53 mediated inhibition of cellular proliferation in response to DNA damage. Also involved in p53-independent DNA damage-induced G2 arrest mediated by CREB3L1 in astrocytes and osteoblasts. Binds to and inhibits cyclin-dependent kinase activity, preventing phosphorylation of critical cyclin-dependent kinase substrates and blocking cell cycle progression. Functions in the nuclear localization and assembly of cyclin D-CDK4 complex and promotes its kinase activity towards RB1. At higher stoichiometric ratios, inhibits the kinase activity of the cyclin D-CDK4 complex. Inhibits DNA synthesis by DNA polymerase delta by competing with POLD3 for PCNA binding. Negatively regulates the CDK4- and CDK6-driven phosphorylation of RB1 in keratinocytes, thereby resulting in the release of E2F1 and subsequent transcription of E2F1-driven G1/S phase promoting genes. The chain is Cyclin-dependent kinase inhibitor 1 (Cdkn1a) from Mus musculus (Mouse).